The sequence spans 82 residues: uncharacterized protein (82 aa).

The protein to M.thermoautotrophicum MTH386.

This is an uncharacterized protein from Methanocaldococcus jannaschii (strain ATCC 43067 / DSM 2661 / JAL-1 / JCM 10045 / NBRC 100440) (Methanococcus jannaschii).